The sequence spans 810 residues: Fibroblast growth factor receptor 1-A (810 aa).

Residues 1-26 (MKMMMIMKTTLLLISVLLTQALQSQG) form the signal peptide. At 27–363 (RPAIQDEAPA…TQLPNQTYLE (337 aa)) the chain is on the extracellular side. 3 consecutive Ig-like C2-type domains span residues 28–115 (PAIQ…FNIS), 147–235 (PDKM…YQLD), and 244–346 (PILQ…AWLT). The cysteines at positions 53 and 99 are disulfide-linked. Residues asparagine 107, asparagine 113, asparagine 216, asparagine 229, asparagine 253, asparagine 285, asparagine 306, asparagine 319, and asparagine 358 are each glycosylated (N-linked (GlcNAc...) asparagine). Cysteine 167 and cysteine 219 form a disulfide bridge. Cysteine 266 and cysteine 330 form a disulfide bridge. Residues 364 to 384 (VLIYCVGFFLICVMVGTAVLA) traverse the membrane as a helical segment. Topologically, residues 385–810 (KMHSSAKKSD…PNRGVAFKKR (426 aa)) are cytoplasmic. Residue tyrosine 450 is modified to Phosphotyrosine; by autocatalysis. Residues 465–754 (LVLGKPLGEG…LSMTSNQEYL (290 aa)) form the Protein kinase domain. ATP contacts are provided by residues 471-477 (LGEGCFG), lysine 501, 549-551 (EFA), and asparagine 555. Phosphotyrosine; by autocatalysis is present on residues tyrosine 570 and tyrosine 572. The active-site Proton acceptor is aspartate 610. Residues arginine 614 and aspartate 628 each contribute to the ATP site. Residues tyrosine 640, tyrosine 641, tyrosine 717, and tyrosine 753 each carry the phosphotyrosine; by autocatalysis modification. The disordered stretch occupies residues 787-810 (AGADEPCLPKFPPHPNRGVAFKKR).

This sequence belongs to the protein kinase superfamily. Tyr protein kinase family. Fibroblast growth factor receptor subfamily. In terms of assembly, monomer. Homodimer after ligand binding. Interacts with cnpy1. Autophosphorylated. Binding of FGF family members together with heparan sulfate proteoglycan or heparin promotes receptor dimerization and autophosphorylation on tyrosine residues. Autophosphorylation occurs in trans between the two FGFR molecules present in the dimer and proceeds in a highly ordered manner. Phosphotyrosine residues provide docking sites for interacting proteins and so are crucial for FGFR1 function and its regulation. Post-translationally, ubiquitinated. FGFR1 is rapidly ubiquitinated after autophosphorylation, leading to internalization and degradation. In terms of processing, N-glycosylated in the endoplasmic reticulum. The N-glycan chains undergo further maturation to an Endo H-resistant form in the Golgi apparatus. As to expression, initially expressed in adaxial mesoderm with transcripts distinctly localized to the anterior portion of each half-somite. Hereupon, also strongly expressed in the otic vesicles, branchial arches and the brain, especially at the midbrain-hindbrain boundary (MHB).

It localises to the cell membrane. The protein resides in the nucleus. The protein localises to the cytoplasm. It is found in the cytosol. Its subcellular location is the cytoplasmic vesicle. It carries out the reaction L-tyrosyl-[protein] + ATP = O-phospho-L-tyrosyl-[protein] + ADP + H(+). Present in an inactive conformation in the absence of bound ligand. Ligand binding leads to dimerization and activation by sequential autophosphorylation on tyrosine residues. Tyrosine-protein kinase that acts as a cell-surface receptor for fibroblast growth factors and plays an essential role in the regulation of embryonic development, cell proliferation, differentiation and migration. Required for normal mesoderm patterning and normal skeletogenesis. Phosphorylates PLCG1, FRS2, GAB1 and SHB. Ligand binding leads to the activation of several signaling cascades. Activation of PLCG1 leads to the production of the cellular signaling molecules diacylglycerol and inositol-1,4,5-trisphosphate. Phosphorylation of FRS2 triggers recruitment of GRB2, GAB1, PIK3R1 and SOS1, and mediates activation of RAS, MAPK1/ERK2, MAPK3/ERK1 and the MAP kinase signaling pathway, as well as of the AKT1 signaling pathway. Promotes phosphorylation of SHC1, STAT1 and PTPN11/SHP2. In the nucleus, enhances RPS6KA1 and CREB1 activity and contributes to the regulation of transcription. FGFR1 signaling is down-regulated by ubiquitination, internalization and degradation. The protein is Fibroblast growth factor receptor 1-A (fgfr1a) of Danio rerio (Zebrafish).